Consider the following 166-residue polypeptide: Coiled-coil domain-containing protein 12 (166 aa).

Position 1 is an N-acetylmethionine (Met-1). The segment at Met-1–Glu-56 is disordered. Positions Val-8 to Lys-28 form a coiled coil. Basic and acidic residues predominate over residues Arg-10–Glu-56. Lys-53 is subject to N6-acetyllysine. Lys-94 participates in a covalent cross-link: Glycyl lysine isopeptide (Lys-Gly) (interchain with G-Cter in SUMO2). A coiled-coil region spans residues Lys-117–Lys-144. The segment at Glu-147 to Asp-166 is disordered. A phosphoserine mark is found at Ser-149 and Ser-165.

The polypeptide is Coiled-coil domain-containing protein 12 (CCDC12) (Homo sapiens (Human)).